The following is a 182-amino-acid chain: Adenine phosphoribosyltransferase (182 aa).

It belongs to the purine/pyrimidine phosphoribosyltransferase family. Homodimer.

It is found in the cytoplasm. It catalyses the reaction AMP + diphosphate = 5-phospho-alpha-D-ribose 1-diphosphate + adenine. It functions in the pathway purine metabolism; AMP biosynthesis via salvage pathway; AMP from adenine: step 1/1. Catalyzes a salvage reaction resulting in the formation of AMP, that is energically less costly than de novo synthesis. In Pseudomonas paraeruginosa (strain DSM 24068 / PA7) (Pseudomonas aeruginosa (strain PA7)), this protein is Adenine phosphoribosyltransferase.